The primary structure comprises 1040 residues: Multidrug resistance protein MdtB (1040 aa).

Helical transmembrane passes span 25 to 45, 347 to 367, 369 to 389, 396 to 416, 440 to 460, 472 to 492, 537 to 557, 863 to 883, 888 to 908, 910 to 930, 968 to 988, and 998 to 1018; these read LLMA…PVAA, LMLA…NIPA, IIPG…MVFL, LTLM…IVVI, IGFT…PLLF, FAVT…TLTP, WLTL…WIVI, LGST…VLGV, FIHP…ALLA, IIAG…LIGI, ILMT…STGV, and IAMV…TPVI.

The protein belongs to the resistance-nodulation-cell division (RND) (TC 2.A.6) family. MdtB subfamily. As to quaternary structure, part of a tripartite efflux system composed of MdtA, MdtB and MdtC. MdtB forms a heteromultimer with MdtC.

The protein resides in the cell inner membrane. The protein is Multidrug resistance protein MdtB of Salmonella dublin (strain CT_02021853).